The sequence spans 735 residues: Ethylene receptor 1 (735 aa).

The next 3 membrane-spanning stretches (helical) occupy residues Ile23 to Val43, Val54 to Trp74, and Val92 to Leu112. Residues Cys65 and His69 each contribute to the Cu cation site. A GAF domain is found at Asp158–Leu307. One can recognise a Histidine kinase domain in the interval Val350 to Asn586. His353 is modified (phosphohistidine; by autocatalysis). The 118-residue stretch at Lys609–Leu726 folds into the Response regulatory domain. At Asp657 the chain carries 4-aspartylphosphate. A Glycyl lysine isopeptide (Lys-Gly) (interchain with G-Cter in ubiquitin) cross-link involves residue Lys711.

It belongs to the ethylene receptor family. Homodimer; disulfide-linked. Requires Cu cation as cofactor. In terms of processing, activation probably requires a transfer of a phosphate group between a His in the transmitter domain and an Asp of the receiver domain.

Its subcellular location is the endoplasmic reticulum membrane. It catalyses the reaction ATP + protein L-histidine = ADP + protein N-phospho-L-histidine.. Functionally, may act early in the ethylene signal transduction pathway, possibly as an ethylene receptor, or as a regulator of the pathway. This is Ethylene receptor 1 (ETR1) from Brassica oleracea (Wild cabbage).